A 577-amino-acid polypeptide reads, in one-letter code: Sulfite reductase [NADPH] hemoprotein beta-component (577 aa).

[4Fe-4S] cluster-binding residues include C436, C442, C481, and C485. C485 serves as a coordination point for siroheme.

It belongs to the nitrite and sulfite reductase 4Fe-4S domain family. In terms of assembly, alpha(8)-beta(8). The alpha component is a flavoprotein, the beta component is a hemoprotein. Siroheme serves as cofactor. Requires [4Fe-4S] cluster as cofactor.

The catalysed reaction is hydrogen sulfide + 3 NADP(+) + 3 H2O = sulfite + 3 NADPH + 4 H(+). The protein operates within sulfur metabolism; hydrogen sulfide biosynthesis; hydrogen sulfide from sulfite (NADPH route): step 1/1. Its function is as follows. Component of the sulfite reductase complex that catalyzes the 6-electron reduction of sulfite to sulfide. This is one of several activities required for the biosynthesis of L-cysteine from sulfate. The polypeptide is Sulfite reductase [NADPH] hemoprotein beta-component (Shewanella woodyi (strain ATCC 51908 / MS32)).